Here is a 626-residue protein sequence, read N- to C-terminus: DNA-directed RNA polymerase subunit gamma (626 aa).

4 residues coordinate Zn(2+): Cys-71, Cys-73, Cys-86, and Cys-89. Mg(2+) contacts are provided by Asp-467, Asp-469, and Asp-471.

It belongs to the RNA polymerase beta' chain family. RpoC1 subfamily. In terms of assembly, in cyanobacteria the RNAP catalytic core is composed of 2 alpha, 1 beta, 1 beta', 1 gamma and 1 omega subunit. When a sigma factor is associated with the core the holoenzyme is formed, which can initiate transcription. Mg(2+) is required as a cofactor. Zn(2+) serves as cofactor.

It catalyses the reaction RNA(n) + a ribonucleoside 5'-triphosphate = RNA(n+1) + diphosphate. Functionally, DNA-dependent RNA polymerase catalyzes the transcription of DNA into RNA using the four ribonucleoside triphosphates as substrates. The sequence is that of DNA-directed RNA polymerase subunit gamma from Microcystis aeruginosa (strain NIES-843 / IAM M-2473).